Consider the following 481-residue polypeptide: Argininosuccinate lyase (481 aa).

The span at Met-1 to Glu-17 shows a compositional bias: polar residues. A disordered region spans residues Met-1–Trp-25.

The protein belongs to the lyase 1 family. Argininosuccinate lyase subfamily.

Its subcellular location is the cytoplasm. It carries out the reaction 2-(N(omega)-L-arginino)succinate = fumarate + L-arginine. The protein operates within amino-acid biosynthesis; L-arginine biosynthesis; L-arginine from L-ornithine and carbamoyl phosphate: step 3/3. This chain is Argininosuccinate lyase, found in Gluconobacter oxydans (strain 621H) (Gluconobacter suboxydans).